We begin with the raw amino-acid sequence, 495 residues long: Cobyric acid synthase (495 aa).

Residues 258 to 427 (GLRVAAVRLP…WHGLFDNDGF (170 aa)) enclose the GATase cobBQ-type domain. Cys-339 functions as the Nucleophile in the catalytic mechanism. His-419 is an active-site residue.

The protein belongs to the CobB/CobQ family. CobQ subfamily.

It functions in the pathway cofactor biosynthesis; adenosylcobalamin biosynthesis. Catalyzes amidations at positions B, D, E, and G on adenosylcobyrinic A,C-diamide. NH(2) groups are provided by glutamine, and one molecule of ATP is hydrogenolyzed for each amidation. The polypeptide is Cobyric acid synthase (Mycobacterium sp. (strain KMS)).